The sequence spans 465 residues: UDP-N-acetylmuramoylalanine--D-glutamate ligase (465 aa).

ATP is bound at residue 115-121 (GTDGKTT).

It belongs to the MurCDEF family.

The protein resides in the cytoplasm. It carries out the reaction UDP-N-acetyl-alpha-D-muramoyl-L-alanine + D-glutamate + ATP = UDP-N-acetyl-alpha-D-muramoyl-L-alanyl-D-glutamate + ADP + phosphate + H(+). The protein operates within cell wall biogenesis; peptidoglycan biosynthesis. Functionally, cell wall formation. Catalyzes the addition of glutamate to the nucleotide precursor UDP-N-acetylmuramoyl-L-alanine (UMA). The sequence is that of UDP-N-acetylmuramoylalanine--D-glutamate ligase from Chlorobaculum tepidum (strain ATCC 49652 / DSM 12025 / NBRC 103806 / TLS) (Chlorobium tepidum).